Here is a 189-residue protein sequence, read N- to C-terminus: Tumor protein p53-inducible protein 11 (189 aa).

Over 1–63 the chain is Cytoplasmic; sequence MAGKQPPPLM…FAVREPLGLR (63 aa). Residue Ser14 is modified to Phosphoserine. A helical membrane pass occupies residues 64 to 84; sequence VWQFLSAMLFSSVAIMALALP. Topologically, residues 85–108 are extracellular; sequence DQLYDAVFDGAEVTSKTPIRLYGG. Residues 109–129 form a helical membrane-spanning segment; the sequence is ALLSISLIMWNALYTAEKVII. Residue Arg130 is a topological domain, cytoplasmic. A helical membrane pass occupies residues 131-151; that stretch reads WTLLTEACYFGVQSLVVTATL. The Extracellular segment spans residues 152–155; sequence AETG. The chain crosses the membrane as a helical span at residues 156–176; sequence LMSLGTVLLLASRLLFVIVSI. Residues 177 to 189 are Cytoplasmic-facing; the sequence is YYYYQVGRKPKKV.

It localises to the membrane. The sequence is that of Tumor protein p53-inducible protein 11 (Trp53i11) from Mus musculus (Mouse).